A 329-amino-acid polypeptide reads, in one-letter code: Malate dehydrogenase (329 aa).

Residue 12–18 (GAAGQIG) coordinates NAD(+). Residues R93 and R99 each coordinate substrate. Residues N106, Q113, and 130 to 132 (TGN) contribute to the NAD(+) site. Residues N132 and R163 each contribute to the substrate site. H188 (proton acceptor) is an active-site residue.

This sequence belongs to the LDH/MDH superfamily. MDH type 2 family.

It carries out the reaction (S)-malate + NAD(+) = oxaloacetate + NADH + H(+). Catalyzes the reversible oxidation of malate to oxaloacetate. This is Malate dehydrogenase from Mycobacterium bovis (strain ATCC BAA-935 / AF2122/97).